Consider the following 712-residue polypeptide: Probable GTP diphosphokinase RSH3, chloroplastic (712 aa).

A chloroplast-targeting transit peptide spans 1–64 (MVVATTIALY…LLFSGASVKS (64 aa)). Residues 65–74 (SSSSSSSHPS) are compositionally biased toward low complexity. The tract at residues 65–84 (SSSSSSSHPSVGEELASIRH) is disordered. An HD domain is found at 237–338 (YLQHCVETAM…IKLADRLHNM (102 aa)).

It belongs to the RelA/SpoT family.

The protein resides in the plastid. The protein localises to the chloroplast. The catalysed reaction is GTP + ATP = guanosine 3'-diphosphate 5'-triphosphate + AMP. Probable ppGpp (guanosine 3'-diphosphate 5'-diphosphate) synthetase that may be involved in a rapid plant ppGpp-mediated response to pathogens and other stresses. The polypeptide is Probable GTP diphosphokinase RSH3, chloroplastic (RSH3) (Arabidopsis thaliana (Mouse-ear cress)).